Reading from the N-terminus, the 592-residue chain is Endoribonuclease Arlr (592 aa).

A signal peptide spans 1–24 (MRCLALSAVFLCLTLAGHFHLSDA). The interval 83-329 (PTAANKPPPL…FQSSGNSVAT (247 aa)) is disordered. Residues 109–120 (PGSSPFGASQNP) show a composition bias toward polar residues. Low complexity-rich tracts occupy residues 134 to 144 (PSHPSQPSQPS) and 188 to 209 (GISSTTSTTTTAKPITSTTGKT). Pro residues-rich tracts occupy residues 234-249 (LPAPKTPPGSPTPTPG) and 258-267 (LPTPQHPVHP). Low complexity predominate over residues 268-294 (PTKATSAATPTPTPTPSFSSSVTPTPA). An EndoU domain is found at 329 to 592 (TDDEIRQLTE…NLIGSAYPEI (264 aa)). Active-site residues include histidine 473, histidine 488, and lysine 531.

Belongs to the ENDOU family. In terms of assembly, monomer. The cofactor is Mn(2+). As to expression, predominantly expressed in head. Expressed in fat body cells.

It localises to the endoplasmic reticulum lumen. The protein resides in the secreted. It carries out the reaction a ribonucleotidyl-ribonucleotide-RNA + H2O = a 3'-end 3'-phospho-ribonucleotide-RNA + a 5'-end dephospho-ribonucleoside-RNA + H(+). Endoribonuclease that cleaves single-stranded RNAs; unlike its paralog EndoU it does not appear to preferentially cleave at uridylates and releases linear products instead of products that have 2'-3'-cyclic phosphate termini. Preferentially cleaves single stranded RNA at sites with AU, UC and poly-U sites cleaved less efficiently. Targets mRNAs encoding proteins involved in lipid metabolism, particularly those involved in lipolysis, to regulate their expression. The sequence is that of Endoribonuclease Arlr from Drosophila melanogaster (Fruit fly).